Reading from the N-terminus, the 1580-residue chain is Transcriptional activator GLI3 (1580 aa).

Residue methionine 1 is modified to N-acetylmethionine. Polar residues-rich tracts occupy residues 1–10 and 58–78; these read MEAQSHSSTT and ITMQ…PSTS. Residues 1 to 79 form a disordered region; that stretch reads MEAQSHSSTT…KVSEEPSTSS (79 aa). Arginine 175 is modified (omega-N-methylarginine). The disordered stretch occupies residues 368 to 475; it reads QSLGSAFGHS…DKDESKQEPE (108 aa). Over residues 401–427 the composition is skewed to polar residues; it reads NPVQVSSGPSESSQNKPTSESAVSSTG. Residues lysine 438 and lysine 462 each participate in a glycyl lysine isopeptide (Lys-Gly) (interchain with G-Cter in SUMO2) cross-link. Residues 461–474 show a composition bias toward basic and acidic residues; it reads VKEEGDKDESKQEP. 5 C2H2-type zinc fingers span residues 480-505, 513-540, 546-570, 576-601, and 607-632; these read TNCH…NNDH, FVCR…MRRH, HKCT…LRSH, YVCE…NRTH, and YVCK…KTVH. The interval 620–728 is disordered; it reads DPSSLRKHVK…PISNYSNSGL (109 aa). Over residues 632–648 the composition is skewed to basic and acidic residues; it reads HGPEAHVTKKQRGDIHP. The residue at position 664 (serine 664) is a Phosphoserine. Residues 684–699 are compositionally biased toward basic and acidic residues; sequence SKREECLQVKTVKAEK. The span at 703–726 shows a compositional bias: low complexity; that stretch reads SQPSPGGQSSCSSQQSPISNYSNS. The interval 745-845 is mediates interaction with DZIP1; sequence DETPIMDSTI…VDVTMLNMLN (101 aa). A Glycyl lysine isopeptide (Lys-Gly) (interchain with G-Cter in ubiquitin) cross-link involves residue lysine 773. Residue lysine 779 forms a Glycyl lysine isopeptide (Lys-Gly) (interchain with G-Cter in SUMO2); alternate linkage. Lysine 779 is covalently cross-linked (Glycyl lysine isopeptide (Lys-Gly) (interchain with G-Cter in ubiquitin); alternate). Residues lysine 784 and lysine 800 each participate in a glycyl lysine isopeptide (Lys-Gly) (interchain with G-Cter in ubiquitin) cross-link. A phosphoserine; by PKA mark is found at serine 849, serine 865, serine 877, and serine 907. Residues 863-882 show a composition bias toward low complexity; that stretch reads RSSGISPCFSSRRSSEASQA. A disordered region spans residues 863–918; that stretch reads RSSGISPCFSSRRSSEASQAEGRPQNVSVADSYDPISTDASRRSSEASQSDGLPSL. A compositionally biased stretch (polar residues) spans 908-918; that stretch reads EASQSDGLPSL. Residues serine 980 and serine 1006 each carry the phosphoserine; by PKA modification. Positions 981-1042 are disordered; sequence DGGAHGYGRR…PAMATSAEKR (62 aa).

This sequence belongs to the GLI C2H2-type zinc-finger protein family. As to quaternary structure, the full-length GLI3 form (GLI3FL) interacts with SUFU and this interaction regulates the formation of either repressor or activator forms of GLI3. Its association with SUFU is regulated by Hh signaling and dissociation of the SUFU-GLI3 interaction requires the presence of the ciliary motor KIF3A. Interacts with KIF7. The activator form of GLI3 (GLI3A) but not the repressor form (GLI3R) can interact with TRPS1. The phosphorylated form interacts with BTRC. Interacts with ZIC1. Interacts with ZIC3 (via C2H2-type domains 3, 4 and 5); the interaction enhances its transcriptional activity. Interacts with WRD11; the interaction associates EMX1 with GLI3. Interacts with DZIP1; retains GLI3 within the cytoplasm. Phosphorylated on multiple sites by protein kinase A (PKA) and phosphorylation by PKA primes further phosphorylation by CK1 and GSK3. Phosphorylated by DYRK2 (in vitro). Phosphorylation is essential for its proteolytic processing. Post-translationally, transcriptional repressor GLI3R, a C-terminally truncated form, is generated from the full-length GLI3 protein (GLI3FL/GLI3-190) through proteolytic processing. This process requires PKA-primed phosphorylation of GLI3, ubiquitination of GLI3 and the presence of BTRC. GLI3FL is complexed with SUFU in the cytoplasm and is maintained in a neutral state. Without the Hh signal, the SUFU-GLI3 complex is recruited to cilia, leading to the efficient processing of GLI3FL into GLI3R. GLI3R formation leads to its dissociation from SUFU, allowing it to translocate into the nucleus, and repress Hh target genes. When Hh signaling is initiated, SUFU dissociates from GLI3FL and this has two consequences. First, GLI3R production is halted. Second, free GLI3FL translocates to the nucleus, where it is phosphorylated, destabilized, and converted to a transcriptional activator (GLI3A). Phosphorylated in vitro by ULK3. In terms of tissue distribution, is expressed in a wide variety of normal adult tissues, including lung, colon, spleen, placenta, testis, and myometrium.

The protein resides in the nucleus. Its subcellular location is the cytoplasm. The protein localises to the cell projection. It localises to the cilium. Functionally, has a dual function as a transcriptional activator and a repressor of the sonic hedgehog (Shh) pathway, and plays a role in limb development. The full-length GLI3 form (GLI3FL) after phosphorylation and nuclear translocation, acts as an activator (GLI3A) while GLI3R, its C-terminally truncated form, acts as a repressor. A proper balance between the GLI3 activator and the repressor GLI3R, rather than the repressor gradient itself or the activator/repressor ratio gradient, specifies limb digit number and identity. In concert with TRPS1, plays a role in regulating the size of the zone of distal chondrocytes, in restricting the zone of PTHLH expression in distal cells and in activating chondrocyte proliferation. Binds to the minimal GLI-consensus sequence 5'-GGGTGGTC-3'. The polypeptide is Transcriptional activator GLI3 (GLI3) (Homo sapiens (Human)).